Here is a 142-residue protein sequence, read N- to C-terminus: Cellulose/chitin binding protein BQ2027_MB2009 (142 aa).

The N-terminal stretch at 1-37 (MAGLNIYVRRWRTALHATVSALIVAILGLAITPVASA) is a signal peptide. The CBM2 domain occupies 38–142 (ATARATLSVT…CLLNGQYPCT (105 aa)).

The protein resides in the secreted. Its subcellular location is the cell wall. It localises to the cell membrane. Its function is as follows. Carbohydrate binding protein that binds chitin and cellulose. Lacks enzymatic activity and does not hydrolyze chitin and cellulose. May interact with mycobacterial biofilms, which are rich in cellulose, and play a role in biofilm formation. Could also act as an adhesin, improving the initial attachment to host cells and aiding M.bovis during the initial stages of infection. May act as a virulence factor that modulates host immune responses and contributes to host immune evasion. This is Cellulose/chitin binding protein BQ2027_MB2009 from Mycobacterium bovis (strain ATCC BAA-935 / AF2122/97).